Consider the following 442-residue polypeptide: MSEMTPREIVHELDAHIIGQKKAKRSVAVALRNRWRRMQLDADFRQEVTPKNILMIGPTGVGKTEIARRLAKLANAPFIKVEATKFTEVGYVGKEVEQIIRDLTDIAIKLTREQQMGKCRQLAEEHAEERILDALLPKPKNDWESTDTDTGSNTRQIFRKKLREGQLDDKEIDIDVAQPQIGIEIMSPPGMEEMTNQLQSLFKNMGQAPAKRRKMKIKEAFKLLIEEEAAKLVNQEDLKEQAIEMVEQHGIVFLDEIDKICKRGETSGPDVSREGVQRDLLPLVEGCTVTTKHGMVKTDHILFIASGAFQMAKPSDLIPELQGRLPIRVELDALSADDFKRILTEPHASLTEQYVALMGTEGVKVEFTESGIESIAKAAWQVNERTENIGARRLHTVMEKLMEDISYEASDKSGSAFVIDADYVSAHLDNLVQDEDLSRFIL.

Residues Ile18, 60-65 (GVGKTE), Asp255, Glu320, and Arg392 contribute to the ATP site.

Belongs to the ClpX chaperone family. HslU subfamily. As to quaternary structure, a double ring-shaped homohexamer of HslV is capped on each side by a ring-shaped HslU homohexamer. The assembly of the HslU/HslV complex is dependent on binding of ATP.

It is found in the cytoplasm. Its function is as follows. ATPase subunit of a proteasome-like degradation complex; this subunit has chaperone activity. The binding of ATP and its subsequent hydrolysis by HslU are essential for unfolding of protein substrates subsequently hydrolyzed by HslV. HslU recognizes the N-terminal part of its protein substrates and unfolds these before they are guided to HslV for hydrolysis. In Shewanella sp. (strain W3-18-1), this protein is ATP-dependent protease ATPase subunit HslU.